A 101-amino-acid chain; its full sequence is NADH-quinone oxidoreductase subunit K (101 aa).

3 helical membrane passes run 4-24 (LSHYLVLGAVLFAIGVVGIFL), 30-50 (IILLMSIELMLLAVNINFVAF), and 61-81 (IFVFFILTVAAAEAAIGLAIL).

Belongs to the complex I subunit 4L family. As to quaternary structure, NDH-1 is composed of 14 different subunits. Subunits NuoA, H, J, K, L, M, N constitute the membrane sector of the complex.

The protein localises to the cell inner membrane. The enzyme catalyses a quinone + NADH + 5 H(+)(in) = a quinol + NAD(+) + 4 H(+)(out). Its function is as follows. NDH-1 shuttles electrons from NADH, via FMN and iron-sulfur (Fe-S) centers, to quinones in the respiratory chain. The immediate electron acceptor for the enzyme in this species is believed to be ubiquinone. Couples the redox reaction to proton translocation (for every two electrons transferred, four hydrogen ions are translocated across the cytoplasmic membrane), and thus conserves the redox energy in a proton gradient. This Nitrosomonas eutropha (strain DSM 101675 / C91 / Nm57) protein is NADH-quinone oxidoreductase subunit K.